The chain runs to 169 residues: MITIYTSKGIKHKVQSVIKTHGTNNVYEICDIQKIYILKNDLGQANGLLQHDKATDQYLIHINENLQHQQFVIAHELGHYFLHKRLNTFKVVNCSKVLKDKLEHQASLFASELILTDKMLNEALPYIQGFSKEQIAAYFNVPSFVTDYKLSQIGSFSNRIYSHEISAFG.

Residue histidine 75 coordinates Zn(2+). Glutamate 76 is an active-site residue. Zn(2+) is bound at residue histidine 79.

As to quaternary structure, interacts with ImmR.

Functionally, involved in the regulation of horizontal gene transfer through the integrative and conjugative element ICEBs1. Required for degradation of the ICEBs1 repressor protein ImmR/YdcN. In Bacillus subtilis (strain 168), this protein is Metallopeptidase ImmA (immA).